The sequence spans 612 residues: Protein cereblon (612 aa).

The segment covering 1–11 (MDDEETAEIED) has biased composition (acidic residues). Disordered regions lie at residues 1–30 (MDDE…GASA), 58–133 (MELI…NPHP), and 181–211 (QERR…PYDV). The segment covering 69 to 81 (AADAPDAAASTGS) has biased composition (low complexity). Over residues 181–190 (QERRRSRTSE) the composition is skewed to basic and acidic residues. The Lon N-terminal domain occupies 250–478 (HMLIFLHQHI…IIGSTLKDES (229 aa)). Residues 477–586 (ESVFYCRYCN…LAGSSVRIGK (110 aa)) enclose the CULT domain. The Zn(2+) site is built by cysteine 482, cysteine 485, cysteine 551, and cysteine 554.

This sequence belongs to the CRBN family. Likely a component of a DCX (DDB1-CUL4-X-box) protein ligase complex. May interact with pic/DDB1. Post-translationally, ubiquitinated.

Its subcellular location is the nucleus. The protein operates within protein modification; protein ubiquitination. Functionally, substrate recognition component of a DCX (DDB1-CUL4-X-box) E3 protein ligase complex that mediates the ubiquitination and subsequent proteasomal degradation of target proteins. Has an essential role in mediating growth by negatively regulating insulin signaling. It also has a role in maintaining presynaptic function in the neuromuscular junction synapses of third-instar larvae. The polypeptide is Protein cereblon (Drosophila willistoni (Fruit fly)).